We begin with the raw amino-acid sequence, 361 residues long: MNWDETGPETDEPTGPVLDDRLVDADADGEDTAVEAALRPKDLEEFVGQEKVREQLDLVLKAARARGATADHVLLSGAPGLGKTTLSMIIAAEMNAPIRITSGPAIQHAGDLAAILSSLQEGEVLFLDEIHRMSRPAEEMLYMAMEDFRVDVIVGKGPGATAIPLELPPFTLVGATTRAGLLPPPLRDRFGFTGHMEFYAPAELERVLHRSARLLDVGIDGEGAAEIAGRSRGTPRIANRLLRRVRDYAQVKAEGTIDRSIAMAALKVYEVDARGLDRLDRAVLGALLKLFGGGPVGLSTLAVAVGEERETVEEVAEPFLVREGLLARTPRGRVATPAAWAHLGLVPPQHGAKGQQGLFGA.

Residues 1–12 (MNWDETGPETDE) show a composition bias toward acidic residues. Positions 1-21 (MNWDETGPETDEPTGPVLDDR) are disordered. The interval 13–199 (PTGPVLDDRL…FGFTGHMEFY (187 aa)) is large ATPase domain (RuvB-L). ATP contacts are provided by residues Leu-38, Arg-39, Gly-80, Lys-83, Thr-84, Thr-85, 146–148 (EDF), Arg-189, Tyr-199, and Arg-236. A Mg(2+)-binding site is contributed by Thr-84. Positions 200 to 270 (APAELERVLH…IAMAALKVYE (71 aa)) are small ATPAse domain (RuvB-S). The tract at residues 273–361 (ARGLDRLDRA…AKGQQGLFGA (89 aa)) is head domain (RuvB-H). DNA contacts are provided by Arg-309, Arg-328, and Arg-333.

The protein belongs to the RuvB family. As to quaternary structure, homohexamer. Forms an RuvA(8)-RuvB(12)-Holliday junction (HJ) complex. HJ DNA is sandwiched between 2 RuvA tetramers; dsDNA enters through RuvA and exits via RuvB. An RuvB hexamer assembles on each DNA strand where it exits the tetramer. Each RuvB hexamer is contacted by two RuvA subunits (via domain III) on 2 adjacent RuvB subunits; this complex drives branch migration. In the full resolvosome a probable DNA-RuvA(4)-RuvB(12)-RuvC(2) complex forms which resolves the HJ.

Its subcellular location is the cytoplasm. It carries out the reaction ATP + H2O = ADP + phosphate + H(+). In terms of biological role, the RuvA-RuvB-RuvC complex processes Holliday junction (HJ) DNA during genetic recombination and DNA repair, while the RuvA-RuvB complex plays an important role in the rescue of blocked DNA replication forks via replication fork reversal (RFR). RuvA specifically binds to HJ cruciform DNA, conferring on it an open structure. The RuvB hexamer acts as an ATP-dependent pump, pulling dsDNA into and through the RuvAB complex. RuvB forms 2 homohexamers on either side of HJ DNA bound by 1 or 2 RuvA tetramers; 4 subunits per hexamer contact DNA at a time. Coordinated motions by a converter formed by DNA-disengaged RuvB subunits stimulates ATP hydrolysis and nucleotide exchange. Immobilization of the converter enables RuvB to convert the ATP-contained energy into a lever motion, pulling 2 nucleotides of DNA out of the RuvA tetramer per ATP hydrolyzed, thus driving DNA branch migration. The RuvB motors rotate together with the DNA substrate, which together with the progressing nucleotide cycle form the mechanistic basis for DNA recombination by continuous HJ branch migration. Branch migration allows RuvC to scan DNA until it finds its consensus sequence, where it cleaves and resolves cruciform DNA. The protein is Holliday junction branch migration complex subunit RuvB of Streptomyces griseus subsp. griseus (strain JCM 4626 / CBS 651.72 / NBRC 13350 / KCC S-0626 / ISP 5235).